Consider the following 96-residue polypeptide: UPF0251 protein Shal_3723 (96 aa).

Belongs to the UPF0251 family.

This is UPF0251 protein Shal_3723 from Shewanella halifaxensis (strain HAW-EB4).